A 490-amino-acid polypeptide reads, in one-letter code: Cytochrome P450 90D2 (490 aa).

A helical transmembrane segment spans residues 4–24 (AAAGWAAPAFAVAAVVIWVVL). Heme is bound at residue Cys437.

This sequence belongs to the cytochrome P450 family. Heme is required as a cofactor.

The protein localises to the membrane. The catalysed reaction is 6-deoxoteasterone + reduced [NADPH--hemoprotein reductase] + O2 = 3-dehydro-6-deoxoteasterone + oxidized [NADPH--hemoprotein reductase] + 2 H2O + H(+). Its pathway is plant hormone biosynthesis; brassinosteroid biosynthesis. In terms of biological role, catalyzes the C6-oxidation step in brassinosteroids biosynthesis. May convert 6-deoxoteasterone (6-deoxoTE) to 3-dehydro-6-deoxoteasterone (6-deoxo3DT, 6-deoxo3DHT), and teasterone (TE) to 3-dehydroteasterone (3DT, 3-DHT). Involved in the elongation of leaf sheaths and stems. The protein is Cytochrome P450 90D2 of Oryza sativa subsp. indica (Rice).